Here is a 339-residue protein sequence, read N- to C-terminus: Heat-inducible transcription repressor HrcA (339 aa).

Belongs to the HrcA family.

In terms of biological role, negative regulator of class I heat shock genes (grpE-dnaK-dnaJ and groELS operons). Prevents heat-shock induction of these operons. The protein is Heat-inducible transcription repressor HrcA of Parafrankia sp. (strain EAN1pec).